The chain runs to 381 residues: Dual-specificity RNA methyltransferase RlmN (381 aa).

E86 acts as the Proton acceptor in catalysis. Residues 105–338 enclose the Radical SAM core domain; sequence RHARYTICVS…CTIRQSKGLD (234 aa). A disulfide bond links C112 and C343. The [4Fe-4S] cluster site is built by C119, C123, and C126. S-adenosyl-L-methionine-binding positions include 169–170, S201, 224–226, and N300; these read GE and SLH. C343 serves as the catalytic S-methylcysteine intermediate. Residues 351–381 form a disordered region; that stretch reads ENPKFRANVSGNSAAKTEEKPTNDKTNVSKK.

It belongs to the radical SAM superfamily. RlmN family. [4Fe-4S] cluster serves as cofactor.

The protein localises to the cytoplasm. It catalyses the reaction adenosine(2503) in 23S rRNA + 2 reduced [2Fe-2S]-[ferredoxin] + 2 S-adenosyl-L-methionine = 2-methyladenosine(2503) in 23S rRNA + 5'-deoxyadenosine + L-methionine + 2 oxidized [2Fe-2S]-[ferredoxin] + S-adenosyl-L-homocysteine. It carries out the reaction adenosine(37) in tRNA + 2 reduced [2Fe-2S]-[ferredoxin] + 2 S-adenosyl-L-methionine = 2-methyladenosine(37) in tRNA + 5'-deoxyadenosine + L-methionine + 2 oxidized [2Fe-2S]-[ferredoxin] + S-adenosyl-L-homocysteine. Its function is as follows. Specifically methylates position 2 of adenine 2503 in 23S rRNA and position 2 of adenine 37 in tRNAs. m2A2503 modification seems to play a crucial role in the proofreading step occurring at the peptidyl transferase center and thus would serve to optimize ribosomal fidelity. This Campylobacter concisus (strain 13826) protein is Dual-specificity RNA methyltransferase RlmN.